The sequence spans 156 residues: 6,7-dimethyl-8-ribityllumazine synthase (156 aa).

5-amino-6-(D-ribitylamino)uracil is bound by residues F23, 57-59 (AFE), and 81-83 (AVI). 86 to 87 (AT) contributes to the (2S)-2-hydroxy-3-oxobutyl phosphate binding site. Catalysis depends on H89, which acts as the Proton donor. N114 is a 5-amino-6-(D-ribitylamino)uracil binding site. A (2S)-2-hydroxy-3-oxobutyl phosphate-binding site is contributed by R128.

It belongs to the DMRL synthase family.

The catalysed reaction is (2S)-2-hydroxy-3-oxobutyl phosphate + 5-amino-6-(D-ribitylamino)uracil = 6,7-dimethyl-8-(1-D-ribityl)lumazine + phosphate + 2 H2O + H(+). The protein operates within cofactor biosynthesis; riboflavin biosynthesis; riboflavin from 2-hydroxy-3-oxobutyl phosphate and 5-amino-6-(D-ribitylamino)uracil: step 1/2. Its function is as follows. Catalyzes the formation of 6,7-dimethyl-8-ribityllumazine by condensation of 5-amino-6-(D-ribitylamino)uracil with 3,4-dihydroxy-2-butanone 4-phosphate. This is the penultimate step in the biosynthesis of riboflavin. The protein is 6,7-dimethyl-8-ribityllumazine synthase of Aliarcobacter butzleri (strain RM4018) (Arcobacter butzleri).